A 511-amino-acid chain; its full sequence is Adenosine deaminase 2 (511 aa).

An N-terminal signal peptide occupies residues 1–29 (MLVDGPSEWPALRFLLLAVAMSFFGSALS). Residues 30 to 100 (IDETRAHLLL…HLIERSQVFN (71 aa)) are dimerization. The Zn(2+) site is built by H112 and H114. Position 115 (D115) interacts with substrate. N127 carries N-linked (GlcNAc...) asparagine glycosylation. A PRB domain region spans residues 127–185 (NVTYRPHCHICFTPKGIMQFRFAHPTPRTSEKCSKWILLEDYRKRVQNVTEFDDSLLRN). Cysteines 137 and 159 form a disulfide. N-linked (GlcNAc...) asparagine glycosylation is found at N174 and N185. Residues 204-211 (WSKFETIF), H293, and G326 each bind substrate. Residue H356 coordinates Zn(2+). The Proton donor role is filled by E359. A glycan (N-linked (GlcNAc...) asparagine) is linked at N378. H384 serves as the catalytic Proton acceptor. Zn(2+) is bound at residue D441. Position 442 (D442) interacts with substrate.

This sequence belongs to the metallo-dependent hydrolases superfamily. Adenosine and AMP deaminases family. ADGF subfamily. As to quaternary structure, homodimer. Interacts with adenosine receptors. Binds heparin. Zn(2+) is required as a cofactor.

The protein localises to the secreted. The enzyme catalyses adenosine + H2O + H(+) = inosine + NH4(+). Its function is as follows. Adenosine deaminase that may contribute to the degradation of extracellular adenosine, a signaling molecule that controls a variety of cellular responses. Requires elevated adenosine levels for optimal enzyme activity. Binds to cell surfaces via proteoglycans and may play a role in the regulation of cell proliferation and differentiation, independently of its enzyme activity. This is Adenosine deaminase 2 from Pongo abelii (Sumatran orangutan).